A 577-amino-acid polypeptide reads, in one-letter code: PTS system lactose-specific EIICB component (577 aa).

The region spanning 4 to 405 is the PTS EIIC type-3 domain; it reads VFDKLKPVFE…VLDVAIYFPF (402 aa). Helical transmembrane passes span 27–47, 63–83, 100–120, 133–153, 176–196, 219–239, 280–300, 326–346, and 386–406; these read GFIA…VAYV, LMVA…GTTA, INPV…SILP, QGLI…YVCI, LIPM…FKAA, YLGL…GVQG, VMNF…LFAA, FGMP…TPIV, and LAFV…FPFI. One can recognise a PTS EIIB type-3 domain in the interval 476 to 577; sequence EVDVLVLCAG…MALDFVESNL (102 aa). The active-site Phosphocysteine intermediate; for EIIB activity is Cys-483. Cys-483 bears the Phosphocysteine; by EIIA mark.

Its subcellular location is the cell membrane. The enzyme catalyses lactose(out) + N(pros)-phospho-L-histidyl-[protein] = lactose 6-phosphate(in) + L-histidyl-[protein]. Functionally, the phosphoenolpyruvate-dependent sugar phosphotransferase system (sugar PTS), a major carbohydrate active transport system, catalyzes the phosphorylation of incoming sugar substrates concomitantly with their translocation across the cell membrane. The enzyme II LacEF PTS system is involved in lactose transport. This chain is PTS system lactose-specific EIICB component, found in Lacticaseibacillus casei (Lactobacillus casei).